A 116-amino-acid polypeptide reads, in one-letter code: Protein Wnt-5(III) (116 aa).

Residue Ser-1 is the site of O-palmitoleoyl serine; by PORCN attachment. Asn-69 carries N-linked (GlcNAc...) asparagine glycosylation. A disulfide bridge links Cys-82 with Cys-97.

The protein belongs to the Wnt family. In terms of processing, palmitoleoylation is required for efficient binding to frizzled receptors. Depalmitoleoylation leads to Wnt signaling pathway inhibition.

The protein resides in the secreted. The protein localises to the extracellular space. Its subcellular location is the extracellular matrix. Its function is as follows. Ligand for members of the frizzled family of seven transmembrane receptors. Probable developmental protein. May be a signaling molecule which affects the development of discrete regions of tissues. Is likely to signal over only few cell diameters. The protein is Protein Wnt-5(III) (WNT-5(III)) of Eptatretus stoutii (Pacific hagfish).